The following is a 428-amino-acid chain: Glutamyl-tRNA reductase (428 aa).

Substrate-binding positions include 55 to 58 (TCNR), serine 114, 119 to 121 (ETQ), and glutamine 125. The active-site Nucleophile is cysteine 56. 194–199 (GAGEMI) is a binding site for NADP(+).

It belongs to the glutamyl-tRNA reductase family. Homodimer.

The catalysed reaction is (S)-4-amino-5-oxopentanoate + tRNA(Glu) + NADP(+) = L-glutamyl-tRNA(Glu) + NADPH + H(+). Its pathway is porphyrin-containing compound metabolism; protoporphyrin-IX biosynthesis; 5-aminolevulinate from L-glutamyl-tRNA(Glu): step 1/2. Functionally, catalyzes the NADPH-dependent reduction of glutamyl-tRNA(Glu) to glutamate 1-semialdehyde (GSA). The polypeptide is Glutamyl-tRNA reductase (Paraburkholderia phytofirmans (strain DSM 17436 / LMG 22146 / PsJN) (Burkholderia phytofirmans)).